Reading from the N-terminus, the 115-residue chain is UPF0342 protein Bsph_0375 (115 aa).

This sequence belongs to the UPF0342 family.

The sequence is that of UPF0342 protein Bsph_0375 from Lysinibacillus sphaericus (strain C3-41).